A 402-amino-acid polypeptide reads, in one-letter code: Phosphoglycerate kinase (402 aa).

Substrate is bound by residues 24-26 (DFN), Arg-40, 63-66 (HFGR), Arg-122, and Arg-155. ATP-binding positions include Lys-206, Gly-297, Glu-328, and 358–361 (GGDS).

Belongs to the phosphoglycerate kinase family. In terms of assembly, monomer.

It is found in the cytoplasm. It carries out the reaction (2R)-3-phosphoglycerate + ATP = (2R)-3-phospho-glyceroyl phosphate + ADP. It participates in carbohydrate degradation; glycolysis; pyruvate from D-glyceraldehyde 3-phosphate: step 2/5. This chain is Phosphoglycerate kinase, found in Prochlorococcus marinus (strain MIT 9312).